Here is a 638-residue protein sequence, read N- to C-terminus: Threonine--tRNA ligase (638 aa).

In terms of domain architecture, TGS spans M1–T61. The tract at residues D242–P533 is catalytic. Zn(2+) contacts are provided by C333, H384, and H510.

Belongs to the class-II aminoacyl-tRNA synthetase family. As to quaternary structure, homodimer. The cofactor is Zn(2+).

It is found in the cytoplasm. It catalyses the reaction tRNA(Thr) + L-threonine + ATP = L-threonyl-tRNA(Thr) + AMP + diphosphate + H(+). Its function is as follows. Catalyzes the attachment of threonine to tRNA(Thr) in a two-step reaction: L-threonine is first activated by ATP to form Thr-AMP and then transferred to the acceptor end of tRNA(Thr). Also edits incorrectly charged L-seryl-tRNA(Thr). The polypeptide is Threonine--tRNA ligase (Prochlorococcus marinus (strain MIT 9301)).